The sequence spans 185 residues: Elongation factor P (185 aa).

The protein belongs to the elongation factor P family.

The protein resides in the cytoplasm. It participates in protein biosynthesis; polypeptide chain elongation. Involved in peptide bond synthesis. Stimulates efficient translation and peptide-bond synthesis on native or reconstituted 70S ribosomes in vitro. Probably functions indirectly by altering the affinity of the ribosome for aminoacyl-tRNA, thus increasing their reactivity as acceptors for peptidyl transferase. The polypeptide is Elongation factor P (Paraburkholderia xenovorans (strain LB400)).